The primary structure comprises 570 residues: Acetolactate synthase (570 aa).

Residue E60 participates in thiamine diphosphate binding. FAD contacts are provided by residues Q162, 266-287 (FRNQPGDLLLEQADVVLTIGYD), and 308-327 (DEIIADIDHAYQPDLELIGD). The thiamine pyrophosphate binding stretch occupies residues 399–479 (SHAIWMSRYF…IVHIVWNDST (81 aa)). D450 lines the Mg(2+) pocket.

The protein belongs to the TPP enzyme family. Mg(2+) serves as cofactor. Thiamine diphosphate is required as a cofactor.

It catalyses the reaction 2 pyruvate + H(+) = (2S)-2-acetolactate + CO2. The protein operates within polyol metabolism; (R,R)-butane-2,3-diol biosynthesis; (R,R)-butane-2,3-diol from pyruvate: step 1/3. This is Acetolactate synthase (alsS) from Bacillus subtilis (strain 168).